The sequence spans 156 residues: Small ribosomal subunit protein uS7 (156 aa).

This sequence belongs to the universal ribosomal protein uS7 family. Part of the 30S ribosomal subunit. Contacts proteins S9 and S11.

Functionally, one of the primary rRNA binding proteins, it binds directly to 16S rRNA where it nucleates assembly of the head domain of the 30S subunit. Is located at the subunit interface close to the decoding center, probably blocks exit of the E-site tRNA. This Ralstonia nicotianae (strain ATCC BAA-1114 / GMI1000) (Ralstonia solanacearum) protein is Small ribosomal subunit protein uS7.